A 127-amino-acid polypeptide reads, in one-letter code: Mitochondrial pyruvate carrier 2 (127 aa).

The Mitochondrial matrix segment spans residues Ala-2–Thr-40. Lys-26 is subject to N6-acetyllysine. The helical transmembrane segment at Val-41–Ala-61 threads the bilayer. Residues Arg-62–Ser-72 are Mitochondrial intermembrane-facing. Residues Thr-73–Ile-90 traverse the membrane as a helical segment. Residues Pro-91–Lys-92 lie on the Mitochondrial matrix side of the membrane. Residues Asn-93–Trp-115 traverse the membrane as a helical segment. The Mitochondrial intermembrane segment spans residues Arg-116–Gln-127.

The protein belongs to the mitochondrial pyruvate carrier (MPC) (TC 2.A.105) family. In terms of assembly, homodimer. Homooligomer. Forms heterodimers with MPC1 and MPC1L. The heterodimer is the more stable and dominant form.

It localises to the mitochondrion inner membrane. The enzyme catalyses pyruvate(out) + H(+)(out) = pyruvate(in) + H(+)(in). Its function is as follows. Mediates the uptake of pyruvate into mitochondria. This is Mitochondrial pyruvate carrier 2 (Mpc2) from Mus musculus (Mouse).